The following is a 343-amino-acid chain: tRNA N6-adenosine threonylcarbamoyltransferase (343 aa).

Fe cation-binding residues include His114 and His118. Substrate contacts are provided by residues 137–141 (LVSGG), Asp171, Gly184, Asp188, and Asn278. Asp306 lines the Fe cation pocket.

It belongs to the KAE1 / TsaD family. Fe(2+) serves as cofactor.

It localises to the cytoplasm. The enzyme catalyses L-threonylcarbamoyladenylate + adenosine(37) in tRNA = N(6)-L-threonylcarbamoyladenosine(37) in tRNA + AMP + H(+). Functionally, required for the formation of a threonylcarbamoyl group on adenosine at position 37 (t(6)A37) in tRNAs that read codons beginning with adenine. Is involved in the transfer of the threonylcarbamoyl moiety of threonylcarbamoyl-AMP (TC-AMP) to the N6 group of A37, together with TsaE and TsaB. TsaD likely plays a direct catalytic role in this reaction. This Acidothermus cellulolyticus (strain ATCC 43068 / DSM 8971 / 11B) protein is tRNA N6-adenosine threonylcarbamoyltransferase.